The sequence spans 296 residues: Non-selective voltage-gated ion channel VDAC2 (296 aa).

K25 provides a ligand contact to ATP. Residue K25 forms a Glycyl lysine isopeptide (Lys-Gly) (interchain with G-Cter in ubiquitin) linkage. S26 is modified (phosphoserine). K33 serves as a coordination point for ATP. K33 is modified (N6-acetyllysine; alternate). An N6-succinyllysine; alternate modification is found at K33. K33 participates in a covalent cross-link: Glycyl lysine isopeptide (Lys-Gly) (interchain with G-Cter in ubiquitin); alternate. Transmembrane regions (beta stranded) follow at residues 39 to 48 (LVKLDVKTKS) and 52 to 60 (VEFTTSGSS). Glycyl lysine isopeptide (Lys-Gly) (interchain with G-Cter in ubiquitin) cross-links involve residues K66 and K74. A beta stranded transmembrane segment spans residues 67 to 77 (VNGSLETKYKW). Y80 bears the Phosphotyrosine mark. Transmembrane regions (beta stranded) follow at residues 82–89 (LTFTEKWN), 93–102 (TLGTEIAIED), and 108–117 (LKLTFDTTFS). T120 is subject to Phosphothreonine. N6-acetyllysine; alternate is present on K122. K122 participates in a covalent cross-link: Glycyl lysine isopeptide (Lys-Gly) (interchain with G-Cter in ubiquitin); alternate. A Glycyl lysine isopeptide (Lys-Gly) (interchain with G-Cter in ubiquitin) cross-link involves residue K123. 4 consecutive transmembrane segments (beta stranded) span residues 124–133 (SGKIKSAYKR), 136–143 (LNLGCDVD), 150–158 (AIHGSAVFG), and 163–171 (LAGYQMTFD). A Glycyl lysine isopeptide (Lys-Gly) (interchain with G-Cter in ubiquitin) cross-link involves residue K174. The next 6 membrane-spanning stretches (beta stranded) occupy residues 176 to 188 (KLTRNNFSVGYKT), 191 to 198 (FQLHTNVN), 202 to 211 (EFGGSIYQKV), 215 to 224 (LETAVNLAWT), 231 to 240 (RFGIAAKYKL), and 244 to 251 (ASISAKVN). A Phosphoserine modification is found at S206. A Phosphoserine modification is found at S253. NAD(+) is bound by residues 255-257 (LVG) and 273-277 (SALID). The next 2 beta stranded transmembrane spans lie at 255 to 264 (LVGVGYTQTL) and 267 to 276 (GVKLTLSALI). At K279 the chain carries N6-acetyllysine; alternate. K279 participates in a covalent cross-link: Glycyl lysine isopeptide (Lys-Gly) (interchain with G-Cter in ubiquitin); alternate. A beta stranded membrane pass occupies residues 286 to 295 (HKLGLGLELE). A Glycyl lysine isopeptide (Lys-Gly) (interchain with G-Cter in ubiquitin) cross-link involves residue K287.

Belongs to the eukaryotic mitochondrial porin family. As to quaternary structure, monomer, homodimer and higher order oligomers; formation of higher order structures is necessary for scramblase activity. Post-translationally, ubiquitinated by PRKN during mitophagy, leading to its degradation and enhancement of mitophagy. Deubiquitinated by USP30.

It is found in the mitochondrion outer membrane. It localises to the membrane. The enzyme catalyses chloride(in) = chloride(out). The catalysed reaction is K(+)(in) = K(+)(out). It catalyses the reaction a 1,2-diacyl-sn-glycero-3-phospho-L-serine(in) = a 1,2-diacyl-sn-glycero-3-phospho-L-serine(out). It carries out the reaction a 1,2-diacyl-sn-glycero-3-phosphocholine(in) = a 1,2-diacyl-sn-glycero-3-phosphocholine(out). The enzyme catalyses a 1,2-diacyl-sn-glycero-3-phospho-(1D-myo-inositol)(in) = a 1,2-diacyl-sn-glycero-3-phospho-(1D-myo-inositol)(out). Functionally, non-selective voltage-gated ion channel that mediates the transport of anions and cations through the mitochondrion outer membrane and plasma membrane. The channel adopts an open conformation at zero mV and a closed conformation at both positive and negative potentials. There are two populations of channels; the main that functions in a lower open-state conductance with lower ion selectivity, that switch, in a voltage-dependent manner, from the open to a low-conducting 'closed' state and the other that has a normal ion selectivity in the typical high conductance, 'open' state. Binds various lipids, including the sphingolipid ceramide, the phospholipid phosphatidylcholine, and the sterols cholesterol and oxysterol. Binding of ceramide promotes the mitochondrial outer membrane permeabilization (MOMP) apoptotic pathway. In terms of biological role, catalyzes the scrambling of phospholipids across the outer mitochondrial membrane; the mechanism is unrelated to channel activity and is capable of translocating both anionic and zwitterionic phospholipids. The sequence is that of Non-selective voltage-gated ion channel VDAC2 from Meleagris gallopavo (Wild turkey).